We begin with the raw amino-acid sequence, 240 residues long: PF03932 family protein CutC (240 aa).

This sequence belongs to the CutC family.

The protein localises to the cytoplasm. The protein is PF03932 family protein CutC of Xanthomonas campestris pv. campestris (strain B100).